Here is a 301-residue protein sequence, read N- to C-terminus: HTH-type transcriptional regulator AbaB (301 aa).

One can recognise an HTH lysR-type domain in the interval 1–58 (MDLALLRTFVTVHRAGSFTRAAALLGLSQPAVTSQIRTLERQLGRPLFLRQARGVTPT). The H-T-H motif DNA-binding region spans 18–37 (FTRAAALLGLSQPAVTSQIR).

The protein belongs to the LysR transcriptional regulatory family.

Its function is as follows. Putative regulator that may be involved in stimulating antibiotic production in S.antibioticus. This chain is HTH-type transcriptional regulator AbaB, found in Streptomyces antibioticus.